Here is a 162-residue protein sequence, read N- to C-terminus: Probable cytosine deaminase (162 aa).

The CMP/dCMP-type deaminase domain maps to 8–132 (EKDLAYLREA…PLYINSRDIL (125 aa)). Histidine 59 serves as a coordination point for Zn(2+). Glutamate 61 (proton donor) is an active-site residue. 2 residues coordinate Zn(2+): cysteine 87 and cysteine 90. Position 159 (aspartate 159) interacts with substrate.

It belongs to the cytidine and deoxycytidylate deaminase family. In terms of assembly, homodimer. Zn(2+) serves as cofactor.

Its subcellular location is the cytoplasm. The protein localises to the nucleus. It carries out the reaction cytosine + H2O + H(+) = uracil + NH4(+). It participates in pyrimidine metabolism; UMP biosynthesis via salvage pathway; uracil from cytosine: step 1/1. Its function is as follows. Catalyzes the hydrolytic deamination of cytosine to uracil or 5-methylcytosine to thymine. Is involved in the pyrimidine salvage pathway, which allows the cell to utilize cytosine for pyrimidine nucleotide synthesis. This chain is Probable cytosine deaminase, found in Schizosaccharomyces pombe (strain 972 / ATCC 24843) (Fission yeast).